A 1534-amino-acid polypeptide reads, in one-letter code: Ribosome-binding protein 1 (1534 aa).

Residues 1 to 7 lie on the Lumenal side of the membrane; that stretch reads MDIYDTQ. The chain crosses the membrane as a helical span at residues 8–28; the sequence is TLGVMVFGGFMVVSAIGIFLV. Topologically, residues 29–1534 are cytoplasmic; sequence STFSMKETSY…DSSSKEGTSV (1506 aa). 2 disordered regions span residues 45–91 and 125–152; these read QRKE…PAPN and PAMP…VEPA. Residues 52-63 are compositionally biased toward basic residues; the sequence is THHQKVEKKKKE. Over residues 64-88 the composition is skewed to basic and acidic residues; that stretch reads KTVEKKGKTKKKEEKPNGKIPDHEP. Low complexity predominate over residues 125-135; the sequence is PAMPQEKLAPS. Lysine 148 participates in a covalent cross-link: Glycyl lysine isopeptide (Lys-Gly) (interchain with G-Cter in SUMO2). 2 positions are modified to phosphoserine: serine 159 and serine 165. Disordered regions lie at residues 173-780, 968-987, and 1021-1082; these read APKE…PLYL, KELV…RKAL, and RELC…RAEN. Low complexity predominate over residues 175-194; it reads KEVPMVVVPPVGAKAGTPAT. 54 tandem repeats follow at residues 197-206, 207-216, 217-226, 227-236, 237-246, 247-256, 257-266, 267-276, 277-286, 287-296, 297-306, 307-316, 317-326, 327-336, 337-346, 347-356, 357-366, 367-376, 377-386, 387-396, 397-406, 407-416, 417-426, 427-436, 437-446, 447-456, 457-466, 467-476, 477-486, 487-496, 497-506, 507-516, 517-526, 527-536, 537-546, 547-556, 557-566, 567-576, 577-586, 587-596, 597-606, 607-616, 617-626, 627-636, 637-646, 647-656, 657-666, 667-676, 677-686, 687-696, 697-706, 707-716, 717-726, and 727-736. The interval 197 to 736 is 54 X 10 AA tandem repeats of [NASG]-[QL]-[GS]-[KRT]-[KR]-[AVTSEG]-[ED]-[AGVLS]-[ATGSV]-[PQLSA]; sequence AQGKKAEGAQ…NQSKRAESAP (540 aa). A Phosphothreonine modification is found at threonine 275. Residues 395–428 are compositionally biased toward polar residues; the sequence is AQNQGKKVEGVQNQGKKAEGAQNQGKKAEGTSSQ. Over residues 474-499 the composition is skewed to polar residues; that stretch reads GSQNQGKKTEGASNQGKKVDGAQNQG. Polar residues predominate over residues 705–718; it reads TPNQGKKSEGSPNQ. Serine 715 is subject to Phosphoserine. Serine 747 is modified (phosphoserine). Residue lysine 752 forms a Glycyl lysine isopeptide (Lys-Gly) (interchain with G-Cter in SUMO1) linkage. Position 1032 is a phosphoserine (serine 1032). The segment covering 1059 to 1080 has biased composition (basic and acidic residues); it reads AEVKSKSEELSGLHGQLKEARA. N6-acetyllysine is present on lysine 1064. A phosphoserine mark is found at serine 1091 and serine 1110. Disordered regions lie at residues 1224 to 1251, 1391 to 1416, and 1509 to 1534; these read ELLK…ETQN, KSHV…VELK, and ERDT…GTSV. The segment covering 1509-1528 has biased composition (basic and acidic residues); it reads ERDTVKKLQEQLDKTDDSSS.

It localises to the endoplasmic reticulum membrane. In terms of biological role, acts as a ribosome receptor and mediates interaction between the ribosome and the endoplasmic reticulum membrane. This Canis lupus familiaris (Dog) protein is Ribosome-binding protein 1 (RRBP1).